The chain runs to 220 residues: uncharacterized protein (220 aa).

This is an uncharacterized protein from Acidianus two-tailed virus (ATV).